The chain runs to 523 residues: Metalloendopeptidase OMA1, mitochondrial (523 aa).

The N-terminal 45 residues, 1 to 45, are a transit peptide targeting the mitochondrion; the sequence is MSFIYGLQSAARNCFFFRFNLLTNWRKCNTQAVTSRDFHQVKINH. The propeptide occupies 46–143; sequence IVNKSLGLGV…RSFHTSPRCQ (98 aa). At 144-195 the chain is on the mitochondrial matrix side; that stretch reads AAPAPLLLMILKPAQKLLAIIVGRGIRKWWQALPPNKKELFKESLRKNKWKL. The tract at residues 148–167 is cardiolipin-binding; the sequence is PLLLMILKPAQKLLAIIVGR. The interval 165–195 is stress-sensor region; the sequence is VGRGIRKWWQALPPNKKELFKESLRKNKWKL. A helical transmembrane segment spans residues 196–216; it reads FLGLSSFGLLFVVFYFTHLEV. Histidine 327 is a Zn(2+) binding site. Glutamate 328 is an active-site residue. Zn(2+) is bound by residues histidine 331 and glutamate 392. A disulfide bridge connects residues cysteine 407 and cysteine 465.

It belongs to the peptidase M48 family. As to quaternary structure, homooligomer. Requires Zn(2+) as cofactor. Post-translationally, autocatalytically cleaved in response to mitochondrial depolarization both at the N-terminus and C-terminus to generate the short active form (S-OMA1). Autocatalytic processing at the C-terminus takes place at residues 447-456. The S-OMA1 form is unstable. OMA1 pre-processing by AFG3L2 may participate in maturation before OMA1 autocatalytic cleavage. Degraded by YMEL1 in response to membrane depolarization. Protein turnover is regulated by prohibitin (PHB and PHB2), which promotes degradation of OMA1 in a cardiolipin-binding manner. In terms of processing, may form a redox-dependent disulfide bond. Exists in a semi-oxidized state and is activated by prolonged hypoxia.

The protein resides in the mitochondrion inner membrane. Protease activity is activated upon autocatalytic cleavage in response to mitochondrial depolarization. In terms of biological role, metalloprotease that is part of the quality control system in the inner membrane of mitochondria. Activated in response to various mitochondrial stress, leading to the proteolytic cleavage of target proteins, such as OPA1, UQCC3 and DELE1. Involved in the fusion of the mitochondrial inner membranes by mediating cleavage of OPA1 at S1 position, generating the soluble OPA1 (S-OPA1), which cooperates with the membrane form (L-OPA1) to coordinate the fusion of mitochondrial inner membranes. Following stress conditions that induce loss of mitochondrial membrane potential, mediates cleavage of OPA1, leading to excess production of soluble OPA1 (S-OPA1) and negative regulation of mitochondrial fusion. Involved in mitochondrial safeguard in response to transient mitochondrial membrane depolarization (flickering) by catalyzing cleavage of OPA1, leading to excess production of S-OPA1, preventing mitochondrial hyperfusion. Also acts as a regulator of apoptosis: upon BAK and BAX aggregation, mediates cleavage of OPA1, leading to the remodeling of mitochondrial cristae and allowing the release of cytochrome c from mitochondrial cristae. In depolarized mitochondria, may also act as a backup protease for PINK1 by mediating PINK1 cleavage and promoting its subsequent degradation by the proteasome. May also cleave UQCC3 in response to mitochondrial depolarization. Also acts as an activator of the integrated stress response (ISR): in response to mitochondrial stress, mediates cleavage of DELE1 to generate the processed form of DELE1 (S-DELE1), which translocates to the cytosol and activates EIF2AK1/HRI to trigger the ISR. Its role in mitochondrial quality control is essential for regulating lipid metabolism as well as to maintain body temperature and energy expenditure under cold-stress conditions. Binds cardiolipin, possibly regulating its protein turnover. Required for the stability of the respiratory supercomplexes. This is Metalloendopeptidase OMA1, mitochondrial from Bos taurus (Bovine).